A 589-amino-acid polypeptide reads, in one-letter code: BTB/POZ domain and ankyrin repeat-containing protein NPR3 (589 aa).

A disordered region spans residues 1–25 (METSTISFSSSSPPSPPPPQPAPGD). A compositionally biased stretch (pro residues) spans 13-22 (PPSPPPPQPA). A BTB domain is found at 52-137 (AEIVLASGGG…LYTGRLRSAP (86 aa)). The C2HC NPR-type zinc finger occupies 140 to 154 (AAACLDDGCSHDACR). Positions 143, 148, 150, and 153 each coordinate Zn(2+). ANK repeat units follow at residues 260–290 (KRVRNIHKALDSDDVDLVGMLLKESPVTLDD), 292–319 (FAIHYAAAYCEPKVLAELLKLESANVNL), and 323–352 (SGYTPLHMACMRREPDIIVSLIEKGASVLE). The salicylic acid-binding core (SBC) stretch occupies residues 382 to 521 (ERSKAYLCIG…LDKFLNEEST (140 aa)). Salicylate is bound at residue arginine 433. Positions 555 to 589 (DKAAGAAISSSTSASSSPRYETKLRPGNKKGKLSR) are disordered. The span at 558 to 571 (AGAAISSSTSASSS) shows a compositional bias: low complexity. Basic residues predominate over residues 580–589 (PGNKKGKLSR).

This sequence belongs to the plant 'ANKYRIN-BTB/POZ' family. 'NPR1-like' subfamily. Interacts with TGA2.1, TGA2.2, TGA2.3, LG2, TGAL1, TGAL4, NRR, RH1, RH2 and RH3.

It localises to the nucleus. Its pathway is protein modification; protein ubiquitination. Salicylic acid (SA)-binding substrate-specific adapter of an E3 ubiquitin-protein ligase complex (CUL3-RBX1-BTB) which mediates the ubiquitination and subsequent proteasomal degradation of target proteins. Involved in defense response against the bacterial blight disease caused by Xanthomonas oryzae pv. oryzae (Xoo). Plants expressing an NPR3/NH3 transgene driven by its native promoter show enhanced resistance to the Xoo pathogen, and exhibit elevated sensitivity to benzothiadiazole (BTH) treatment and enhanced induction of defense-related genes upon treatment with BTH. Intriguingly, constitutive over-expression of NPR3/NH3 with a ubiquitin promoter does not confer disease resistance to Xoo. The protein is BTB/POZ domain and ankyrin repeat-containing protein NPR3 of Oryza sativa subsp. japonica (Rice).